The chain runs to 147 residues: UPF0178 protein VP2328 (147 aa).

The protein belongs to the UPF0178 family.

This chain is UPF0178 protein VP2328, found in Vibrio parahaemolyticus serotype O3:K6 (strain RIMD 2210633).